Consider the following 348-residue polypeptide: Enkurin domain-containing protein 1 (348 aa).

Disordered regions lie at residues methionine 1–glycine 65, glycine 84–lysine 195, and alanine 262–proline 282. A Phosphoserine modification is found at serine 93. Residues lysine 95–glycine 127 are compositionally biased toward basic and acidic residues. Serine 138 carries the post-translational modification Phosphoserine. Residues proline 139–valine 148 show a composition bias toward basic and acidic residues. One can recognise an Enkurin domain in the interval glutamate 253 to lysine 345.

Interacts with alpha-tubulin. Interacts (via central region) with CCP110 (via N-terminal region); competes with CEP97 for binding to CCP110.

It localises to the cytoplasm. The protein localises to the cytoskeleton. Its subcellular location is the microtubule organizing center. It is found in the centrosome. The protein resides in the centriole. It localises to the cilium basal body. The protein localises to the cell projection. Its subcellular location is the cilium. It is found in the spindle. The protein resides in the spindle pole. It localises to the cilium axoneme. Its function is as follows. Microtubule-binding protein which regulates microtubule organization and stability. Promotes the stability of astral microtubules and facilitates the proper orientation of the mitotic spindle. This allows the oriented division of basal keratinocytes and contributes to epidermal stratification. Required for the assembly of both primary and motile cilia. Destabilizes the interaction between CCP110 and CEP97 by competing with CEP97 for binding to CCP110 which promotes the removal of CCP110 and CEP97 from the mother centriole and allows the initiation of ciliogenesis. This Bos taurus (Bovine) protein is Enkurin domain-containing protein 1 (ENKD1).